The primary structure comprises 605 residues: Elongation factor 4 (605 aa).

The region spanning 5–187 (ALIRNFSIIA…AVVERIPPPK (183 aa)) is the tr-type G domain. Residues 17 to 22 (DHGKST) and 134 to 137 (NKID) each bind GTP.

This sequence belongs to the TRAFAC class translation factor GTPase superfamily. Classic translation factor GTPase family. LepA subfamily.

The protein localises to the cell inner membrane. The enzyme catalyses GTP + H2O = GDP + phosphate + H(+). Required for accurate and efficient protein synthesis under certain stress conditions. May act as a fidelity factor of the translation reaction, by catalyzing a one-codon backward translocation of tRNAs on improperly translocated ribosomes. Back-translocation proceeds from a post-translocation (POST) complex to a pre-translocation (PRE) complex, thus giving elongation factor G a second chance to translocate the tRNAs correctly. Binds to ribosomes in a GTP-dependent manner. The sequence is that of Elongation factor 4 from Novosphingobium aromaticivorans (strain ATCC 700278 / DSM 12444 / CCUG 56034 / CIP 105152 / NBRC 16084 / F199).